A 446-amino-acid polypeptide reads, in one-letter code: Probable rhamnogalacturonase A (446 aa).

The first 18 residues, Met-1–Gly-18, serve as a signal peptide directing secretion. The cysteines at positions 39 and 65 are disulfide-linked. 3 N-linked (GlcNAc...) asparagine glycosylation sites follow: Asn-50, Asn-115, and Asn-124. Asp-216 (proton donor) is an active-site residue. Cys-218 and Cys-235 are disulfide-bonded. N-linked (GlcNAc...) asparagine glycosylation is found at Asn-236 and Asn-281. The active site involves His-291. N-linked (GlcNAc...) asparagine glycosylation occurs at Asn-318. Intrachain disulfides connect Cys-341-Cys-347 and Cys-369-Cys-378.

Belongs to the glycosyl hydrolase 28 family.

The protein resides in the secreted. It carries out the reaction Endohydrolysis of alpha-D-GalA-(1-&gt;2)-alpha-L-Rha glycosidic bond in the rhamnogalacturonan I backbone with initial inversion of anomeric configuration releasing oligosaccharides with beta-D-GalA at the reducing end.. In terms of biological role, pectinolytic enzymes consist of four classes of enzymes: pectine lyase, polygalacturonase, pectin methylesterase and rhamnogalacturonase. Hydrolyzes alpha-D-galacturonopyranosyl-(1,2)-alpha-L-rhamnopyranosyl linkages in the backbone of the hairy regions of pectins. This Aspergillus niger (strain ATCC MYA-4892 / CBS 513.88 / FGSC A1513) protein is Probable rhamnogalacturonase A (rhgA).